A 451-amino-acid polypeptide reads, in one-letter code: Phosphoglucosamine mutase (451 aa).

Residue serine 102 is the Phosphoserine intermediate of the active site. Mg(2+) contacts are provided by serine 102, aspartate 242, aspartate 244, and aspartate 246. Serine 102 is modified (phosphoserine).

The protein belongs to the phosphohexose mutase family. Requires Mg(2+) as cofactor. Activated by phosphorylation.

The enzyme catalyses alpha-D-glucosamine 1-phosphate = D-glucosamine 6-phosphate. Its function is as follows. Catalyzes the conversion of glucosamine-6-phosphate to glucosamine-1-phosphate. This chain is Phosphoglucosamine mutase, found in Staphylococcus aureus (strain Mu3 / ATCC 700698).